A 1371-amino-acid chain; its full sequence is Trifunctional purine biosynthetic protein adenosine-3 (1371 aa).

Positions 115-321 (KDFMIRHHIP…LYDLMMASCT (207 aa)) constitute an ATP-grasp domain. ATP contacts are provided by residues 193–196 (EEKL), Glu-200, Arg-223, and Asn-232. Residues Glu-291 and Asn-293 each coordinate Mg(2+). Residues 434 to 1171 (IHSLTYKESG…ERLLSIPKKR (738 aa)) are AIRS domain. The interval 1169-1369 (KKRVGVLISG…VRLNDKCETE (201 aa)) is GART domain. 1180–1182 (GSN) lines the N(1)-(5-phospho-beta-D-ribosyl)glycinamide pocket. Residues Arg-1235, 1260–1263 (MRIL), and Asn-1277 each bind (6R)-10-formyltetrahydrofolate. The active-site Proton donor is His-1279. 1311-1315 (DENVD) is a binding site for (6R)-10-formyltetrahydrofolate. 1341 to 1344 (HVAE) lines the N(1)-(5-phospho-beta-D-ribosyl)glycinamide pocket.

The protein in the N-terminal section; belongs to the GARS family. It in the central section; belongs to the AIR synthase family. In the C-terminal section; belongs to the GART family. As to quaternary structure, homodimer. It depends on Mg(2+) as a cofactor. Requires Mn(2+) as cofactor.

It catalyses the reaction 5-phospho-beta-D-ribosylamine + glycine + ATP = N(1)-(5-phospho-beta-D-ribosyl)glycinamide + ADP + phosphate + H(+). The catalysed reaction is 2-formamido-N(1)-(5-O-phospho-beta-D-ribosyl)acetamidine + ATP = 5-amino-1-(5-phospho-beta-D-ribosyl)imidazole + ADP + phosphate + H(+). The enzyme catalyses N(1)-(5-phospho-beta-D-ribosyl)glycinamide + (6R)-10-formyltetrahydrofolate = N(2)-formyl-N(1)-(5-phospho-beta-D-ribosyl)glycinamide + (6S)-5,6,7,8-tetrahydrofolate + H(+). Its pathway is purine metabolism; IMP biosynthesis via de novo pathway; 5-amino-1-(5-phospho-D-ribosyl)imidazole from N(2)-formyl-N(1)-(5-phospho-D-ribosyl)glycinamide: step 2/2. It functions in the pathway purine metabolism; IMP biosynthesis via de novo pathway; N(1)-(5-phospho-D-ribosyl)glycinamide from 5-phospho-alpha-D-ribose 1-diphosphate: step 2/2. The protein operates within purine metabolism; IMP biosynthesis via de novo pathway; N(2)-formyl-N(1)-(5-phospho-D-ribosyl)glycinamide from N(1)-(5-phospho-D-ribosyl)glycinamide (10-formyl THF route): step 1/1. Its function is as follows. Trifunctional enzyme that catalyzes three distinct reactions as part of the 'de novo' inosine monophosphate biosynthetic pathway. This chain is Trifunctional purine biosynthetic protein adenosine-3 (GART), found in Chironomus tentans (Midge).